Consider the following 251-residue polypeptide: 3-deoxy-manno-octulosonate cytidylyltransferase (251 aa).

The protein belongs to the KdsB family.

The protein resides in the cytoplasm. The catalysed reaction is 3-deoxy-alpha-D-manno-oct-2-ulosonate + CTP = CMP-3-deoxy-beta-D-manno-octulosonate + diphosphate. The protein operates within nucleotide-sugar biosynthesis; CMP-3-deoxy-D-manno-octulosonate biosynthesis; CMP-3-deoxy-D-manno-octulosonate from 3-deoxy-D-manno-octulosonate and CTP: step 1/1. Its pathway is bacterial outer membrane biogenesis; lipopolysaccharide biosynthesis. Activates KDO (a required 8-carbon sugar) for incorporation into bacterial lipopolysaccharide in Gram-negative bacteria. In Brucella ovis (strain ATCC 25840 / 63/290 / NCTC 10512), this protein is 3-deoxy-manno-octulosonate cytidylyltransferase.